The following is a 1819-amino-acid chain: Protein REDUCED CHLOROPLAST COVERAGE 2 (1819 aa).

The span at 1–17 (MAPKAGKTKPHKSKGEK) shows a compositional bias: basic residues. 4 disordered regions span residues 1–23 (MAPK…KEEK), 128–180 (KPPV…GACE), 595–619 (QASS…GLGK), and 634–664 (KANK…LEKQ). 2 stretches are compositionally biased toward basic and acidic residues: residues 135-145 (LPKDSEKKESG) and 600-612 (SESK…KPEP). Residues 329–603 (EDETWGGDGG…NQASSKSESK (275 aa)) form the Clu domain. Residues 649-680 (TDNTSETEDQKELEKQNEEIEKMWKELVTETA) adopt a coiled-coil conformation. 5 TPR repeats span residues 892-925 (GRTL…LVAV), 934-967 (AGAY…NERE), 976-1009 (MKSY…LHLT), 1018-1051 (AATY…NQRL), and 1060-1093 (AASY…LQAK). Disordered regions lie at residues 1152–1360 (SGIK…PMLS), 1413–1456 (KVNA…SPKE), 1468–1513 (KAFP…SESV), 1527–1573 (LKTV…ASAP), 1616–1670 (STPH…PRIM), and 1731–1809 (LVSE…DYSD). Basic and acidic residues-rich tracts occupy residues 1199–1224 (SSDK…EQSK) and 1230–1239 (KLVKPEATVH). Phosphoserine is present on S1244. The span at 1269-1313 (KLNTNFMNVTQQPSRSRGKSTNFTSPRTSSNELSISVAGSTSSPA) shows a compositional bias: polar residues. S1320 is subject to Phosphoserine. A compositionally biased stretch (polar residues) spans 1343 to 1354 (LASSACTEQINK). Composition is skewed to polar residues over residues 1496–1511 (CLLN…NGSE) and 1536–1546 (NLPNGDSSPKS). Positions 1551 to 1566 (DGEKQDACEAQKEMSK) are enriched in basic and acidic residues. Polar residues predominate over residues 1650 to 1665 (SFPNSTESNGEANQFN). Residues 1742–1759 (SEEKSGSEEESNNDKNAG) show a composition bias toward basic and acidic residues. The span at 1767-1778 (QETTDTPENGHS) shows a compositional bias: polar residues. Residues 1785-1800 (TTSHETCDEKNGERQG) show a composition bias toward basic and acidic residues.

As to expression, expressed in the non-epidermal tissues of the true leaves. Not detected in the vegetative shoot meristem and leaf primordia.

Its subcellular location is the nucleus. It localises to the cytoplasm. The protein resides in the cytosol. Negatively regulates meristematic tissue proliferation by integrating developmental signals with carbon source availability. May act as the scaffold of a protein complex, which sequesters key factors that are required for the G2 to M transition in meristematic tissues. Together with REC2, REC3 and FMT/CLU, contributes to the establishment of the cellular volume devoted to the chloroplast compartment. The protein is Protein REDUCED CHLOROPLAST COVERAGE 2 of Arabidopsis thaliana (Mouse-ear cress).